Consider the following 218-residue polypeptide: Methylthioribulose-1-phosphate dehydratase (218 aa).

Residues His-107 and His-109 each coordinate Zn(2+).

Belongs to the aldolase class II family. MtnB subfamily. Requires Zn(2+) as cofactor.

It carries out the reaction 5-(methylsulfanyl)-D-ribulose 1-phosphate = 5-methylsulfanyl-2,3-dioxopentyl phosphate + H2O. It functions in the pathway amino-acid biosynthesis; L-methionine biosynthesis via salvage pathway; L-methionine from S-methyl-5-thio-alpha-D-ribose 1-phosphate: step 2/6. Catalyzes the dehydration of methylthioribulose-1-phosphate (MTRu-1-P) into 2,3-diketo-5-methylthiopentyl-1-phosphate (DK-MTP-1-P). In Xylella fastidiosa (strain M12), this protein is Methylthioribulose-1-phosphate dehydratase.